A 97-amino-acid chain; its full sequence is Co-chaperonin GroES (97 aa).

The protein belongs to the GroES chaperonin family. Heptamer of 7 subunits arranged in a ring. Interacts with the chaperonin GroEL.

It is found in the cytoplasm. In terms of biological role, together with the chaperonin GroEL, plays an essential role in assisting protein folding. The GroEL-GroES system forms a nano-cage that allows encapsulation of the non-native substrate proteins and provides a physical environment optimized to promote and accelerate protein folding. GroES binds to the apical surface of the GroEL ring, thereby capping the opening of the GroEL channel. The chain is Co-chaperonin GroES from Pseudomonas fluorescens (strain Pf0-1).